A 480-amino-acid chain; its full sequence is MTIFEISKEGRIGFQLPDNNIKDYEINLPEHLLRKSLPRLPQVSEVDVVRHYTNLSAKNYSVDVGFYPLGSCTMKYNPKVNEKVASFEEFSMIHPFQPHETVQGALKLMYDLKEMLCEITGMDDMTLIPSAGAHGELTGILISRAYHLSRGDTKRTKVIVPDSAHGTNPASARMAGFDVIEIKSGPDGRVDLNELEKVLDETVAVIMLTNPNTLGLFEKDILKIAQMAHDKGALLYYDGANLNAILGRTRPGDMGFDIVHLNLHKTFSTPHGMGGPGSGPVGVKKHLAKFLPVPEIVKIEDKYTLNYNKPESIGFIRSYFGNFSVMVRAYTYIKTMGKDGLKKAGEMAVLNANYLRVKVSKIMDIAYPGICMHEFVSTCEKLTKETGVKALDIAKRLLDYGIHAPTMYFPLIVHEDFMIEPTETESKDTLDKFAQILEKIFNEARENPELVKGAPYNTPVRRLDDVSASRKPVFKYNFEE.

Lysine 265 is subject to N6-(pyridoxal phosphate)lysine.

It belongs to the GcvP family. C-terminal subunit subfamily. In terms of assembly, the glycine cleavage system is composed of four proteins: P, T, L and H. In this organism, the P 'protein' is a heterodimer of two subunits. It depends on pyridoxal 5'-phosphate as a cofactor.

The enzyme catalyses N(6)-[(R)-lipoyl]-L-lysyl-[glycine-cleavage complex H protein] + glycine + H(+) = N(6)-[(R)-S(8)-aminomethyldihydrolipoyl]-L-lysyl-[glycine-cleavage complex H protein] + CO2. In terms of biological role, the glycine cleavage system catalyzes the degradation of glycine. The P protein binds the alpha-amino group of glycine through its pyridoxal phosphate cofactor; CO(2) is released and the remaining methylamine moiety is then transferred to the lipoamide cofactor of the H protein. This is Probable glycine dehydrogenase (decarboxylating) subunit 2 from Thermosipho africanus (strain TCF52B).